Consider the following 20-residue polypeptide: Peroxidase 1 (20 aa).

Histidine 14 is a binding site for heme. Residue threonine 15 coordinates Ca(2+).

Belongs to the peroxidase family. Classical plant (class III) peroxidase subfamily. The cofactor is Ca(2+). Requires heme b as cofactor.

Its subcellular location is the secreted. The catalysed reaction is 2 a phenolic donor + H2O2 = 2 a phenolic radical donor + 2 H2O. Its function is as follows. Removal of H(2)O(2), oxidation of toxic reductants, biosynthesis and degradation of lignin, suberization, auxin catabolism, response to environmental stresses such as wounding, pathogen attack and oxidative stress. These functions might be dependent on each isozyme/isoform in each plant tissue. The polypeptide is Peroxidase 1 (Betula pendula (European white birch)).